The following is a 193-amino-acid chain: dCTP deaminase (193 aa).

DCTP-binding positions include 110-115 (RSSLAR), aspartate 128, 136-138 (VLE), tyrosine 171, lysine 178, and glutamine 182. The active-site Proton donor/acceptor is glutamate 138.

The protein belongs to the dCTP deaminase family. As to quaternary structure, homotrimer.

The catalysed reaction is dCTP + H2O + H(+) = dUTP + NH4(+). It participates in pyrimidine metabolism; dUMP biosynthesis; dUMP from dCTP (dUTP route): step 1/2. Catalyzes the deamination of dCTP to dUTP. This Buchnera aphidicola subsp. Schizaphis graminum (strain Sg) protein is dCTP deaminase.